A 191-amino-acid polypeptide reads, in one-letter code: uncharacterized protein (191 aa).

An N-terminal signal peptide occupies residues 1–22; the sequence is MKSLRLMLCAMPLMLTGCSTMS.

This is an uncharacterized protein from Escherichia coli (strain K12).